Consider the following 507-residue polypeptide: Cyclic GMP-AMP synthase (507 aa).

Residues 1-146 are DNA-binding; the sequence is MEDPRRRTTA…PRAPRGSRKE (146 aa). Residues 1–151 form a disordered region; sequence MEDPRRRTTA…GSRKEPDKLK (151 aa). Residues 7–18 show a composition bias toward basic residues; it reads RTTAPRAKKPSA. The segment covering 44-57 has biased composition (basic and acidic residues); sequence RRAERDGDTTEKPR. Residues 48 to 59 form a required for association with the cell membrane region; sequence RDGDTTEKPRAP. T52 is modified (phosphothreonine). The required for activation upon DNA viral infection stretch occupies residues 119 to 132; sequence RKVVRGPSHRRGAR. Basic residues predominate over residues 121 to 131; it reads VVRGPSHRRGA. The Nuclear export signal signature appears at 154–159; that stretch reads LDKLRL. K156 is subject to N6-lactoyllysine. The segment at 158–201 is DNA-binding; that stretch reads RLKRKDISEAAETVNKVVERLLRRMQKRESEFKGVEQLNTGSYY. PolyADP-ribosyl glutamic acid is present on E176. Residue T197 participates in GTP binding. S199 provides a ligand contact to ATP. The residue at position 199 (S199) is a Phosphoserine. Phosphotyrosine is present on Y201. Mg(2+) is bound by residues E211 and D213. D213 is a 2',3'-cGAMP binding site. K217 is covalently cross-linked (Glycyl lysine isopeptide (Lys-Gly) (interchain with G-Cter in SUMO)). K271 is covalently cross-linked (Glycyl lysine isopeptide (Lys-Gly) (interchain with G-Cter in ubiquitin)). E272 carries the 5-glutamyl polyglutamate modification. The short motif at 281 to 291 is the Nuclear localization signal element; sequence DVSVEKEKPGS. Residue G290 participates in 2',3'-cGAMP binding. S291 is subject to Phosphoserine; by CDK1 and PKB. At E302 the chain carries 5-glutamyl glutamate. D307 is a GTP binding site. D307 is a Mg(2+) binding site. D307 is a 2',3'-cGAMP binding site. Residues 329–370 form an interaction with collided ribosomes region; that stretch reads QGWLGTKVRTNLRREPFYLVPKNAKDGNSFQGETWRLSFSHT. K335 participates in a covalent cross-link: Glycyl lysine isopeptide (Lys-Gly) (interchain with G-Cter in SUMO); alternate. K335 participates in a covalent cross-link: Glycyl lysine isopeptide (Lys-Gly) (interchain with G-Cter in ubiquitin); alternate. Residues K350 and 364–366 each bind 2',3'-cGAMP; that span reads RLS. Residue 364–371 coordinates GTP; it reads RLSFSHTE. E371 is an ATP binding site. Residue K372 forms a Glycyl lysine isopeptide (Lys-Gly) (interchain with G-Cter in SUMO); alternate linkage. K372 is covalently cross-linked (Glycyl lysine isopeptide (Lys-Gly) (interchain with G-Cter in ubiquitin); alternate). Residue K372 is modified to N6-acetyllysine. The segment at 372 to 395 is DNA-binding; the sequence is KYILNNHGIEKTCCESSGAKCCRK. H378 contacts Zn(2+). Residue K382 forms a Glycyl lysine isopeptide (Lys-Gly) (interchain with G-Cter in SUMO) linkage. N6-acetyllysine is present on K382. Residues C384, C385, and C392 each contribute to the Zn(2+) site. Residues C392 and C393 are each lipidated (S-palmitoyl cysteine). Glycyl lysine isopeptide (Lys-Gly) (interchain with G-Cter in ubiquitin) cross-links involve residues K399, K402, K409, and K410. K402 lines the ATP pocket. An N6-acetyllysine modification is found at K402. S420 carries the post-translational modification Phosphoserine. ATP is bound at residue 420–424; sequence SYHVK. A lipid anchor (S-palmitoyl cysteine) is attached at C459. K464 is covalently cross-linked (Glycyl lysine isopeptide (Lys-Gly) (interchain with G-Cter in SUMO); alternate). Residue K464 forms a Glycyl lysine isopeptide (Lys-Gly) (interchain with G-Cter in ubiquitin); alternate linkage. K491 is subject to N6-methyllysine.

Belongs to the mab-21 family. In terms of assembly, monomer in the absence of DNA. Homodimer in presence of dsDNA: forms a 2:2 dimer with two enzymes binding to two DNA molecules. Interacts with nucleosomes; interaction is mainly mediated via histones H2A and H2B and inactivates the nucleotidyltransferase activity by blocking DNA-binding and subsequent activation. Interacts with PQBP1 (via WW domain). Interacts with TRIM14; this interaction recruits USP14, leading to deubiquitinate and stabilize CGAS and promote type I interferon production. Interacts with ZCCHC3; promoting sensing of dsDNA by CGAS. Interacts (when not monomethylated) with (poly-ADP-ribosylated) PARP1; interaction takes place in the nucleus and prevents the formation of the PARP1-TIMELESS complex. Interacts (when monomethylated) with SGF29; interaction with SGF29 prevents interaction with PARP1. Interacts with PCBP2; preventing the formation of liquid-like droplets in which CGAS is activated. Interacts with Irgm1; promoting CGAS degradation. Interacts with DDX41. It depends on Mg(2+) as a cofactor. Requires Mn(2+) as cofactor. Zn(2+) serves as cofactor. In terms of processing, the N-terminal disordered part (1-146) is phosphorylated by AURKB during the G2-M transition, blocking CGAS liquid phase separation and preventing activation. Phosphorylation at Tyr-201 by BLK promotes cytosolic retention. Localizes into the nucleus following dephosphorylation at Tyr-201. Phosphorylation at Ser-420 activates the nucleotidyltransferase activity. Dephosphorylation at Ser-420 by PPP6C impairs its ability to bind GTP, thereby inactivating it. Phosphorylation at Thr-52 and Ser-199 by PRKDC inhibits its cyclic GMP-AMP synthase activity by impairing homodimerization and activation. Phosphorylation at Ser-291 by AKT (AKT1, AKT2 or AKT3) suppresses the nucleotidyltransferase activity. Phosphorylation at Ser-291 by CDK1 during mitosis leads to its inhibition, thereby preventing CGAS activation by self-DNA during mitosis. Dephosphorylated at Ser-291 by protein phosphatase PP1 upon mitotic exit. Post-translationally, ubiquitinated at Lys-402 via 'Lys-48'-linked polyubiquitin chains, leading to its SQSTM1-mediated autophagic degradation. Interaction with TRIM14 promotes recruitment of USP14, leading to deubiquitinate Lys-402 and stabilize CGAS. Ubiquitinated at Lys-372 by RNF185 via 'Lys-27'-linked polyubiquitination, promoting CGAS cyclic GMP-AMP synthase activity. Monoubiquitination at Lys-335 by TRIM56 promotes oligomerization and subsequent activation. Monoubiquitination by TRIM41 promotes CGAS activation. Ubiquitination at Lys-271 and Lys-464 via 'Lys-48'-linked polyubiquitination promotes its degradation. Deubiquitination at Lys-271 by USP29 promotes its stabilization. Deubiquitinated by USP27X, promoting its stabilization. Ubiquitinated at Lys-399 via 'Lys-63'-linked polyubiquitin chains by MARCHF8, leading to the inhibition of its DNA binding ability. In cycling cells, nucleosome-bound CGAS is ubiquitinated at Lys-409 and Lys-410 via 'Lys-48'-linked polyubiquitin chains by the ECS(SPSB3) complex, leading to its degradation: ubiquitination and degradation of nuclear CGAS during G1 and G2 phases is required to promote low intranuclear CGAS abundance before the next mitotic cycle. Sumoylated at Lys-217 and Lys-464 by TRIM38 in uninfected cells and during the early phase of viral infection, promoting its stability by preventing ubiquitination at Lys-271 and Lys-464, and subsequent degradation. Desumoylated by SENP2 during the late phase of viral infection. Sumoylation at Lys-335, Lys-372 and Lys-382 prevents DNA-binding, oligomerization and nucleotidyltransferase activity. Desumoylation at Lys-335, Lys-372 and Lys-382 by SENP7 relieves inhibition and activates CGAS. In terms of processing, polyglutamylated by TTLL6 at Glu-272, leading to impair DNA-binding activity. Monoglutamylated at Glu-302 by TTLL4, leading to impair the nucleotidyltransferase activity. Deglutamylated by AGBL5/CCP5 and AGBL6/CCP6. Post-translationally, acetylation at Lys-372, Lys-382 and Lys-402 inhibits the cyclic GMP-AMP synthase activity. Deacetylated upon cytosolic DNA challenge such as viral infections. Acetylation by KAT5 increases the cyclic GMP-AMP synthase activity by promoting DNA-binding and subsequent activation. Proteolytically cleaved by apoptotic caspases during apoptosis, leading to its inactivation. The damage of the nucleus and the mitochondria during apoptosis leads to leakage of nuclear and mitochondrial DNA, which activate CGAS: cleavage and inactivation during apoptosis in required to prevent cytokine overproduction. Cleaved by CASP7 and CASP3 during virus-induced apoptosis, thereby inactivating it and preventing cytokine overproduction. Cleaved by CASP1 upon DNA virus infection; the cleavage impairs cGAMP production. Also cleaved by the pyroptotic CASP4 during non-canonical inflammasome activation; does not cut at the same sites than CASP1. In terms of processing, degraded via selective autophagy following interaction with Irgm1. Irgm1 promotes CGAS recruitment to autophagosome membranes, promoting its SQSTM1/p62-dependent autophagic degradation. Post-translationally, poly-ADP-ribosylation at Glu-176 by PARP1 impairs DNA-binding, thereby preventing the cyclic GMP-AMP synthase activity. Palmitoylation at Cys-459 by ZDHHC18 impairs DNA-binding, thereby preventing the cyclic GMP-AMP synthase activity. Palmitoylation at Cys-392 and Cys-393 by ZDHHC9 promotes homodimerization and cyclic GMP-AMP synthase activity. Depalmitoylation at Cys-392 and Cys-393 by LYPLAL1 impairs homodimerization and cyclic GMP-AMP synthase activity. In terms of processing, monomethylated at Lys-491 by SETD7. Monomethylation promotes interaction with SGF29, preventing interaction between PARP1 nad SGF29. Demethylation by RIOX1 promotes interaction with PARP1, followed by PARP1 inactivation. Post-translationally, lactylation by AARS2 prevents ability to undergo liquid-liquid phase separation (LLPS), thereby inhibiting CGAS activation.

It localises to the nucleus. Its subcellular location is the chromosome. It is found in the cell membrane. The protein resides in the cytoplasm. The protein localises to the cytosol. It catalyses the reaction GTP + ATP = 2',3'-cGAMP + 2 diphosphate. The catalysed reaction is GTP + ATP = pppGp(2'-5')A + diphosphate. The enzyme catalyses pppGp(2'-5')A = 2',3'-cGAMP + diphosphate. The enzyme activity is strongly increased by double-stranded DNA (dsDNA), but not by single-stranded DNA or RNA. DNA-binding induces the formation of liquid-like droplets in which CGAS is activated. Liquid-like droplets also create a selective environment that restricts entry of negative regulators, such as TREX1 or BANF1/BAF, allowing sensing of DNA. A number of mechanisms exist to restrict its activity toward self-DNA. The nucleotidyltransferase activity is inhibited in the nucleus via its association with nucleosomes: interacts with the acidic patch of histones H2A and H2B, thereby blocking DNA-binding and subsequent activation. CGAS is also inactive when associated with mitotic chromatin. Chromatin-bound CGAS cannot be activated by exogenous DNA in mitotic cells: phosphorylation of the N-terminal disordered part by AURKB during the G2-M transition blocks CGAS liquid phase separation and activation. Activity toward self-DNA is inhibited by BANF1/BAF upon acute loss of nuclear membrane integrity: BANF1/BAF acts by outcompeting CGAS for DNA-binding, thereby preventing CGAS activation. DNA-induced activation at micronuclei is also limited by TREX1, which degrades micronuclear DNA upon nuclear envelope rupture, thereby preventing CGAS activation. CGAS can be released from nucleosomes and activated by MRE11 component of the MRN complex, which displaces CGAS from acidic-patch-mediated sequestration. Acetylation at Lys-372, Lys-382 and Lys-402 inhibits the cyclic GMP-AMP synthase activity. Acetylation by KAT5 increases the cyclic GMP-AMP synthase activity by promoting DNA-binding and subsequent activation. Phosphorylation at Ser-291 suppresses the nucleotidyltransferase activity. Phosphorylation at Ser-420 promotes the cyclic GMP-AMP synthase activity. Phosphorylation at Thr-52 and Ser-199 inhibits its cyclic GMP-AMP synthase activity. Ubiquitination at Lys-372 via 'Lys-27'-linked polyubiquitination enhances the cyclic GMP-AMP synthase activity. Monoubiquitination at Lys-335 promotes oligomerization and subsequent activation. Sumoylation at Lys-335, Lys-372 and Lys-382 prevents DNA-binding, oligomerization and nucleotidyltransferase activity. The enzyme activity is impaired by the cleavage by CASP1. In addition to DNA, also activated by collided ribosomes upon translation stress: specifically binds collided ribosomes, promoting its activation and triggering type-I interferon production. In hematopoietic stem cells, binding to circular RNA cia-cGAS inhibits the cyclic GMP-AMP synthase activity. Strongly inhibited by compound RU.521, which is specific for mouse protein. Its function is as follows. Nucleotidyltransferase that catalyzes the formation of cyclic GMP-AMP (2',3'-cGAMP) from ATP and GTP and plays a key role in innate immunity. Catalysis involves both the formation of a 2',5' phosphodiester linkage at the GpA step and the formation of a 3',5' phosphodiester linkage at the ApG step, producing c[G(2',5')pA(3',5')p]. Acts as a key DNA sensor: directly binds double-stranded DNA (dsDNA), inducing the formation of liquid-like droplets in which CGAS is activated, leading to synthesis of 2',3'-cGAMP, a second messenger that binds to and activates STING1, thereby triggering type-I interferon production. Preferentially binds long dsDNA (around 45 bp) and forms ladder-like networks that function cooperatively to stabilize individual cGAS-dsDNA complexes. Acts as a key foreign DNA sensor, the presence of double-stranded DNA (dsDNA) in the cytoplasm being a danger signal that triggers the immune responses. Has antiviral activity by sensing the presence of dsDNA from DNA viruses in the cytoplasm. Also acts as an innate immune sensor of infection by retroviruses by detecting the presence of reverse-transcribed DNA in the cytosol. Detection of retroviral reverse-transcribed DNA in the cytosol may be indirect and be mediated via interaction with PQBP1, which directly binds reverse-transcribed retroviral DNA. Also detects the presence of DNA from bacteria. 2',3'-cGAMP can be transferred from producing cells to neighboring cells through gap junctions, leading to promote STING1 activation and convey immune response to connecting cells. 2',3'-cGAMP can also be transferred between cells by virtue of packaging within viral particles contributing to IFN-induction in newly infected cells in a cGAS-independent but STING1-dependent manner. Also senses the presence of neutrophil extracellular traps (NETs) that are translocated to the cytosol following phagocytosis, leading to synthesis of 2',3'-cGAMP. In addition to foreign DNA, can also be activated by endogenous nuclear or mitochondrial DNA. When self-DNA leaks into the cytosol during cellular stress (such as mitochondrial stress, DNA damage, mitotic arrest or senescence), or is present in form of cytosolic micronuclei, CGAS is activated leading to a state of sterile inflammation. Acts as a regulator of cellular senescence by binding to cytosolic chromatin fragments that are present in senescent cells, leading to trigger type-I interferon production via STING1 and promote cellular senescence. Also involved in the inflammatory response to genome instability and double-stranded DNA breaks: acts by localizing to micronuclei arising from genome instability. Micronuclei, which as frequently found in cancer cells, consist of chromatin surrounded by its own nuclear membrane: following breakdown of the micronuclear envelope, a process associated with chromothripsis, CGAS binds self-DNA exposed to the cytosol, leading to 2',3'-cGAMP synthesis and subsequent activation of STING1 and type-I interferon production. In a healthy cell, CGAS is however kept inactive even in cellular events that directly expose it to self-DNA, such as mitosis, when cGAS associates with chromatin directly after nuclear envelope breakdown or remains in the form of postmitotic persistent nuclear cGAS pools bound to chromatin. Nuclear CGAS is inactivated by chromatin via direct interaction with nucleosomes, which block CGAS from DNA binding and thus prevent CGAS-induced autoimmunity. Also acts as a suppressor of DNA repair in response to DNA damage: inhibits homologous recombination repair by interacting with PARP1, the CGAS-PARP1 interaction leading to impede the formation of the PARP1-TIMELESS complex. In addition to DNA, also sense translation stress: in response to translation stress, translocates to the cytosol and associates with collided ribosomes, promoting its activation and triggering type-I interferon production. This Mus musculus (Mouse) protein is Cyclic GMP-AMP synthase.